Reading from the N-terminus, the 251-residue chain is MLAKRIIPCLDIKDGQTVKGTNFVNLRQAGDPVELGRTYSEQGADELVFLDITASHEGRKTFTDLVKRVAANINIPFTVGGGINELSDVDRLLNAGADKVSINSSAIRNPDLVDKIAKHFGSQVCVVAIDAKQTETGWKCYLNGGRIETDKYLFDWAKEVNNRGAGEILFTSMNHDGVKNGYANEALSTLADLLTIPVIASGGAGCMEHFRDTFAKGKADAALAASVFHFGEIKIPELKQYLCEQGINVRL.

Residues Asp-11 and Asp-130 contribute to the active site.

Belongs to the HisA/HisF family. As to quaternary structure, heterodimer of HisH and HisF.

The protein localises to the cytoplasm. The catalysed reaction is 5-[(5-phospho-1-deoxy-D-ribulos-1-ylimino)methylamino]-1-(5-phospho-beta-D-ribosyl)imidazole-4-carboxamide + L-glutamine = D-erythro-1-(imidazol-4-yl)glycerol 3-phosphate + 5-amino-1-(5-phospho-beta-D-ribosyl)imidazole-4-carboxamide + L-glutamate + H(+). Its pathway is amino-acid biosynthesis; L-histidine biosynthesis; L-histidine from 5-phospho-alpha-D-ribose 1-diphosphate: step 5/9. Its function is as follows. IGPS catalyzes the conversion of PRFAR and glutamine to IGP, AICAR and glutamate. The HisF subunit catalyzes the cyclization activity that produces IGP and AICAR from PRFAR using the ammonia provided by the HisH subunit. This Phocaeicola vulgatus (strain ATCC 8482 / DSM 1447 / JCM 5826 / CCUG 4940 / NBRC 14291 / NCTC 11154) (Bacteroides vulgatus) protein is Imidazole glycerol phosphate synthase subunit HisF.